The following is a 455-amino-acid chain: Folate transporter 2 (455 aa).

8 helical membrane passes run 42–64 (IVVY…IYYL), 84–103 (YIPF…FSIF), 110–131 (YLFL…LNLS), 137–157 (LILF…EALV), 177–195 (IASK…GYFL), 201–221 (EYIF…CLFL), 242–261 (FINT…YMSG), and 281–301 (SFMG…IIIY). An N-linked (GlcNAc...) asparagine glycan is attached at N307. The next 2 membrane-spanning stretches (helical) occupy residues 313-331 (TLII…PIIL) and 347-367 (VLSG…PLFI). N416 is a glycosylation site (N-linked (GlcNAc...) asparagine). Residues 417 to 438 (LSLYILTCGFFLLFSLTLVPLL) traverse the membrane as a helical segment.

Belongs to the major facilitator superfamily. Folate-biopterin transporter (TC 2.A.71) family.

It localises to the cell membrane. The enzyme catalyses folate(in) + H(+)(in) = folate(out) + H(+)(out). It carries out the reaction (6S)-5-methyl-5,6,7,8-tetrahydrofolate(in) + H(+)(in) = (6S)-5-methyl-5,6,7,8-tetrahydrofolate(out) + H(+)(out). Transport of folates is inhibited by probenecid and methotrexate. Its function is as follows. Folate transporter with broad substrate specificity. Transports folic acid, folinic acid, pteroic acid, dihydropteroic acid, the folate precursor p-amino benzoic acid (pABA) and the human folate catabolite pABA monoglutamate. Can transport 5-methyltetrahydrofolate with low efficiency. The polypeptide is Folate transporter 2 (Plasmodium falciparum (isolate 3D7)).